The chain runs to 602 residues: Cholinesterase (602 aa).

Positions 1–28 (MQSKGTIISIQFLLRFLLLWVLIGKSHT) are cleaved as a signal peptide. N-linked (GlcNAc...) asparagine glycosylation is present at asparagine 85. A disulfide bond links cysteine 93 and cysteine 120. Asparagine 134 carries N-linked (GlcNAc...) asparagine glycosylation. 144–145 (GG) provides a ligand contact to substrate. Serine 226 acts as the Acyl-ester intermediate in catalysis. At serine 226 the chain carries Phosphoserine. N-linked (GlcNAc...) asparagine glycans are attached at residues asparagine 269 and asparagine 284. Cysteine 280 and cysteine 291 form a disulfide bridge. The Charge relay system role is filled by glutamate 353. Residue asparagine 369 is glycosylated (N-linked (GlcNAc...) asparagine). The cysteines at positions 428 and 547 are disulfide-linked. The active-site Charge relay system is the histidine 466. Asparagine 483, asparagine 509, asparagine 513, and asparagine 514 each carry an N-linked (GlcNAc...) asparagine glycan.

This sequence belongs to the type-B carboxylesterase/lipase family. In terms of assembly, homotetramer; disulfide-linked. Dimer of dimers.

The protein resides in the secreted. The enzyme catalyses an acylcholine + H2O = a carboxylate + choline + H(+). Functionally, esterase with broad substrate specificity. Contributes to the inactivation of the neurotransmitter acetylcholine. Can degrade neurotoxic organophosphate esters. The chain is Cholinesterase (BCHE) from Felis catus (Cat).